The following is a 112-amino-acid chain: Large ribosomal subunit protein bL17 (112 aa).

Belongs to the bacterial ribosomal protein bL17 family. As to quaternary structure, part of the 50S ribosomal subunit. Contacts protein L32.

The chain is Large ribosomal subunit protein bL17 from Thermoanaerobacter pseudethanolicus (strain ATCC 33223 / 39E) (Clostridium thermohydrosulfuricum).